Here is a 203-residue protein sequence, read N- to C-terminus: MARSFSQLAINAEKQRTSLAVSKKPTDQPELEIHTLGNSALRQSAKRISKVDKNIRDLVKKMLHSMYAAKGIGLAAPQIGSQQQLLVIDLDIENSATPPIILINPEITEFSATIDTYEEGCLSIPGVYLDVIRPSSIKVNFRDEMGRPKKINADGLLARCIQHEMDHLNGVLFVDRAINEEALNKELKEHGFKKKDVLRLCSD.

Cys121 and His163 together coordinate Fe cation. The active site involves Glu164. His167 is a Fe cation binding site.

The protein belongs to the polypeptide deformylase family. It depends on Fe(2+) as a cofactor.

It carries out the reaction N-terminal N-formyl-L-methionyl-[peptide] + H2O = N-terminal L-methionyl-[peptide] + formate. Removes the formyl group from the N-terminal Met of newly synthesized proteins. Requires at least a dipeptide for an efficient rate of reaction. N-terminal L-methionine is a prerequisite for activity but the enzyme has broad specificity at other positions. The sequence is that of Peptide deformylase from Prochlorococcus marinus (strain SARG / CCMP1375 / SS120).